The sequence spans 316 residues: 4-hydroxyphenylacetate decarboxylase activating enzyme (316 aa).

A Radical SAM core domain is found at 20 to 307 (HDGPGCRTTV…QDIFLDNGIA (288 aa)). C34, C38, C41, C60, C66, C69, and C105 together coordinate [4Fe-4S] cluster. Residue 40–42 (WCA) participates in S-adenosyl-L-methionine binding. Residues 84–115 (NKPVIDWNICKDCESFECVNSCYYNAFKLCAK) form the 4Fe-4S ferredoxin-type domain. S-adenosyl-L-methionine-binding positions include G144, 193–195 (DIK), and H267.

The protein belongs to the organic radical-activating enzymes family. Monomer. [4Fe-4S] cluster serves as cofactor.

The catalysed reaction is glycyl-[protein] + reduced [flavodoxin] + S-adenosyl-L-methionine = glycin-2-yl radical-[protein] + semiquinone [flavodoxin] + 5'-deoxyadenosine + L-methionine + H(+). Its function is as follows. Catalyzes activation of 4-hydroxyphenylacetate decarboxylase under anaerobic conditions by generation of an organic free radical on a glycine residue, via a homolytic cleavage of S-adenosyl-L-methionine (SAM). The chain is 4-hydroxyphenylacetate decarboxylase activating enzyme from Clostridioides difficile (strain 630) (Peptoclostridium difficile).